The primary structure comprises 229 residues: MNKIMIVEDSEDIRGLLQNYLEKYGYQTVVAADFTAVLDVFLREKPDVVLLDINLPAYDGYYWCRQIRQHSTSPIIFISARSGEMDQVMAIENGGDDYIEKPFSYDIVLAKIKSQIRRAYGEYAAKQGEKVVEYAGVQLFVERFELRFQDEKSELSKKESKLLEVLLERGEKVTSRDRLMEKTWDTDIFIDDNTLNVYITRLRKKLRELNAPVSIEAVRGEGYQLRAQS.

The 114-residue stretch at 3 to 116 (KIMIVEDSED…IVLAKIKSQI (114 aa)) folds into the Response regulatory domain. Position 52 is a 4-aspartylphosphate (aspartate 52). The ompR/PhoB-type DNA-binding region spans 129–227 (EKVVEYAGVQ…VRGEGYQLRA (99 aa)).

Post-translationally, phosphorylated by YxdK.

It is found in the cytoplasm. Probable member of the two-component regulatory system YxdK/YxdJ. Positively regulates the expression of the yxdLMyxeA operon by direct interaction with its promoter region. Could also indirectly regulate the expression of the dlt operon. This chain is Transcriptional regulatory protein YxdJ (yxdJ), found in Bacillus subtilis (strain 168).